Reading from the N-terminus, the 397-residue chain is Small ribosomal subunit protein mS29 (397 aa).

The transit peptide at 1–17 (MLKGMTRLVSRVHKLDP) directs the protein to the mitochondrion. 2 positions are modified to N6-acetyllysine: Lys174 and Lys206.

Belongs to the mitochondrion-specific ribosomal protein mS29 family. Component of the mitochondrial ribosome small subunit (28S) which comprises a 12S rRNA and about 30 distinct proteins. Interacts with DELE1. Interacts with NOA1.

The protein resides in the mitochondrion. It catalyses the reaction GTP + H2O = GDP + phosphate + H(+). In terms of biological role, as a component of the mitochondrial small ribosomal subunit, it plays a role in the translation of mitochondrial mRNAs. Involved in mediating interferon-gamma-induced cell death. Displays GTPase activity in vitro. This chain is Small ribosomal subunit protein mS29, found in Bos taurus (Bovine).